The primary structure comprises 102 residues: Small ribosomal subunit protein uS10 (102 aa).

The protein belongs to the universal ribosomal protein uS10 family. Part of the 30S ribosomal subunit.

Functionally, involved in the binding of tRNA to the ribosomes. The protein is Small ribosomal subunit protein uS10 of Mycoplasma mobile (strain ATCC 43663 / 163K / NCTC 11711) (Mesomycoplasma mobile).